The chain runs to 869 residues: Alanine--tRNA ligase (869 aa).

4 residues coordinate Zn(2+): histidine 559, histidine 563, cysteine 660, and histidine 664.

The protein belongs to the class-II aminoacyl-tRNA synthetase family. Requires Zn(2+) as cofactor.

It is found in the cytoplasm. The catalysed reaction is tRNA(Ala) + L-alanine + ATP = L-alanyl-tRNA(Ala) + AMP + diphosphate. In terms of biological role, catalyzes the attachment of alanine to tRNA(Ala) in a two-step reaction: alanine is first activated by ATP to form Ala-AMP and then transferred to the acceptor end of tRNA(Ala). Also edits incorrectly charged Ser-tRNA(Ala) and Gly-tRNA(Ala) via its editing domain. The protein is Alanine--tRNA ligase of Herminiimonas arsenicoxydans.